Reading from the N-terminus, the 310-residue chain is tRNA dimethylallyltransferase (310 aa).

Residue 14–21 (GPTASGKS) coordinates ATP. 16–21 (TASGKS) provides a ligand contact to substrate. 2 interaction with substrate tRNA regions span residues 39–42 (DSMQ) and 163–167 (QRIVR).

The protein belongs to the IPP transferase family. Monomer. Mg(2+) is required as a cofactor.

The catalysed reaction is adenosine(37) in tRNA + dimethylallyl diphosphate = N(6)-dimethylallyladenosine(37) in tRNA + diphosphate. Functionally, catalyzes the transfer of a dimethylallyl group onto the adenine at position 37 in tRNAs that read codons beginning with uridine, leading to the formation of N6-(dimethylallyl)adenosine (i(6)A). The chain is tRNA dimethylallyltransferase from Brucella suis biovar 1 (strain 1330).